A 158-amino-acid polypeptide reads, in one-letter code: 3-dehydroquinate dehydratase (158 aa).

The active-site Proton acceptor is Tyr22. Residues Asn74, His80, and Asp87 each contribute to the substrate site. The Proton donor role is filled by His100. Substrate contacts are provided by residues 101–102 and Arg111; that span reads IS.

This sequence belongs to the type-II 3-dehydroquinase family. Homododecamer.

It catalyses the reaction 3-dehydroquinate = 3-dehydroshikimate + H2O. It participates in metabolic intermediate biosynthesis; chorismate biosynthesis; chorismate from D-erythrose 4-phosphate and phosphoenolpyruvate: step 3/7. Its function is as follows. Catalyzes a trans-dehydration via an enolate intermediate. The polypeptide is 3-dehydroquinate dehydratase (Helicobacter hepaticus (strain ATCC 51449 / 3B1)).